Consider the following 282-residue polypeptide: Ribosomal RNA small subunit methyltransferase I (282 aa).

This sequence belongs to the methyltransferase superfamily. RsmI family.

It localises to the cytoplasm. The catalysed reaction is cytidine(1402) in 16S rRNA + S-adenosyl-L-methionine = 2'-O-methylcytidine(1402) in 16S rRNA + S-adenosyl-L-homocysteine + H(+). In terms of biological role, catalyzes the 2'-O-methylation of the ribose of cytidine 1402 (C1402) in 16S rRNA. In Buchnera aphidicola subsp. Acyrthosiphon pisum (strain APS) (Acyrthosiphon pisum symbiotic bacterium), this protein is Ribosomal RNA small subunit methyltransferase I.